The primary structure comprises 305 residues: Acetyl-coenzyme A carboxylase carboxyl transferase subunit beta (305 aa).

Positions 25–294 constitute a CoA carboxyltransferase N-terminal domain; that stretch reads VWTKCDSCGQ…PGNDDVEIRS (270 aa). Zn(2+)-binding residues include cysteine 29, cysteine 32, cysteine 48, and cysteine 51. A C4-type zinc finger spans residues 29 to 51; that stretch reads CDSCGQVLYRAELERNLGVCPKC. The interval 281–305 is disordered; the sequence is NHPEPGNDDVEIRSDAPSESSQDDA.

It belongs to the AccD/PCCB family. In terms of assembly, acetyl-CoA carboxylase is a heterohexamer composed of biotin carboxyl carrier protein (AccB), biotin carboxylase (AccC) and two subunits each of ACCase subunit alpha (AccA) and ACCase subunit beta (AccD). Zn(2+) serves as cofactor.

It localises to the cytoplasm. It carries out the reaction N(6)-carboxybiotinyl-L-lysyl-[protein] + acetyl-CoA = N(6)-biotinyl-L-lysyl-[protein] + malonyl-CoA. It participates in lipid metabolism; malonyl-CoA biosynthesis; malonyl-CoA from acetyl-CoA: step 1/1. Its function is as follows. Component of the acetyl coenzyme A carboxylase (ACC) complex. Biotin carboxylase (BC) catalyzes the carboxylation of biotin on its carrier protein (BCCP) and then the CO(2) group is transferred by the transcarboxylase to acetyl-CoA to form malonyl-CoA. The sequence is that of Acetyl-coenzyme A carboxylase carboxyl transferase subunit beta from Pectobacterium atrosepticum (strain SCRI 1043 / ATCC BAA-672) (Erwinia carotovora subsp. atroseptica).